We begin with the raw amino-acid sequence, 143 residues long: ATP synthase F(0) complex subunit C2, mitochondrial (143 aa).

The N-terminal 68 residues, 1 to 68 (MYTCAKFVST…RSFQTSAISR (68 aa)), are a transit peptide targeting the mitochondrion. The helical transmembrane segment at 84–104 (VGVAGSGAGIGTVFGSLIIGY) threads the bilayer. At Lys-111 the chain carries N6,N6,N6-trimethyllysine. A helical transmembrane segment spans residues 119 to 139 (ILGFALSEAMGLFCLMVAFLI).

Belongs to the ATPase C chain family. In terms of assembly, F-type ATPases have 2 components, CF(1) - the catalytic core - and CF(0) - the membrane proton channel. CF(1) has five subunits: alpha(3), beta(3), gamma(1), delta(1), epsilon(1). CF(0) has three main subunits: a, b and c. Interacts with DNAJC30; interaction is direct. In terms of processing, trimethylated by ATPSCKMT at Lys-111. Methylation is required for proper incorporation of the C subunit into the ATP synthase complex and mitochondrial respiration.

It is found in the mitochondrion membrane. Functionally, mitochondrial membrane ATP synthase (F(1)F(0) ATP synthase or Complex V) produces ATP from ADP in the presence of a proton gradient across the membrane which is generated by electron transport complexes of the respiratory chain. F-type ATPases consist of two structural domains, F(1) - containing the extramembraneous catalytic core and F(0) - containing the membrane proton channel, linked together by a central stalk and a peripheral stalk. During catalysis, ATP synthesis in the catalytic domain of F(1) is coupled via a rotary mechanism of the central stalk subunits to proton translocation. Part of the complex F(0) domain. A homomeric c-ring of probably 10 subunits is part of the complex rotary element. The sequence is that of ATP synthase F(0) complex subunit C2, mitochondrial from Bos taurus (Bovine).